The following is a 497-amino-acid chain: Arabinose import ATP-binding protein AraG (497 aa).

2 ABC transporter domains span residues 6–242 (LRFD…MVGR) and 250–497 (FRPR…ALPA). 38 to 45 (GENGAGKS) serves as a coordination point for ATP.

Belongs to the ABC transporter superfamily. Arabinose importer (TC 3.A.1.2.2) family. In terms of assembly, the complex is composed of two ATP-binding proteins (AraG), two transmembrane proteins (AraH) and a solute-binding protein (AraF).

The protein localises to the cell inner membrane. It catalyses the reaction L-arabinose(out) + ATP + H2O = L-arabinose(in) + ADP + phosphate + H(+). Its function is as follows. Part of the ABC transporter complex AraFGH involved in arabinose import. Responsible for energy coupling to the transport system. This Chromohalobacter salexigens (strain ATCC BAA-138 / DSM 3043 / CIP 106854 / NCIMB 13768 / 1H11) protein is Arabinose import ATP-binding protein AraG.